Here is a 318-residue protein sequence, read N- to C-terminus: BES1/BZR1 homolog protein 2 (318 aa).

Over residues 1-13 (MAAGGGGGGGGSS) the composition is skewed to gly residues. 4 disordered regions span residues 1–34 (MAAG…RRRR), 84–133 (FKPP…PSPS), 166–195 (NSAP…PNGG), and 209–231 (APSS…CDES). Positions 16–97 (RTPTWKEREN…ASDISGTPTN (82 aa)) are required for DNA-binding. Over residues 91-101 (ISGTPTNFSTN) the composition is skewed to polar residues. The span at 102-133 (SSIQPSPQSSAFPSPAPSYHGSPVSSSFPSPS) shows a compositional bias: low complexity.

The protein belongs to the BZR/LAT61 family. Post-translationally, phosphorylated. Phosphorylation increases protein degradation.

This chain is BES1/BZR1 homolog protein 2 (BEH2), found in Arabidopsis thaliana (Mouse-ear cress).